The sequence spans 131 residues: MTPGEYVLADTPVVCNAGREAITLEVLNRGDRPVQVGSHFHFAEANRALDFDRERATGHRLDIPAGTAVRLEPGDSTTVRLIPLGGDRVVHGFRDLVDGPLDPAAGVTSDEDAASAVVPRGAETSEREARA.

The tract at residues 100-131 (PLDPAAGVTSDEDAASAVVPRGAETSEREARA) is disordered.

This sequence belongs to the urease beta subunit family. As to quaternary structure, heterotrimer of UreA (gamma), UreB (beta) and UreC (alpha) subunits. Three heterotrimers associate to form the active enzyme.

It is found in the cytoplasm. It carries out the reaction urea + 2 H2O + H(+) = hydrogencarbonate + 2 NH4(+). The protein operates within nitrogen metabolism; urea degradation; CO(2) and NH(3) from urea (urease route): step 1/1. The polypeptide is Urease subunit beta (Kocuria rhizophila (strain ATCC 9341 / DSM 348 / NBRC 103217 / DC2201)).